A 103-amino-acid polypeptide reads, in one-letter code: Protamine-2 (103 aa).

The interval 1–103 (MVRYRMRSLS…RTRRRRCRRH (103 aa)) is disordered. Phosphoserine is present on residues Ser-8 and Ser-10. Over residues 8–17 (SLSERPHEVH) the composition is skewed to basic and acidic residues. The span at 18–29 (GQQVHGQDQGHN) shows a compositional bias: low complexity. The span at 48–103 (HRGHSHHRRRRCSRRRLHRIHRRRHRSCRRRRRRSCRHRRRHRRGCRTRRRRCRRH) shows a compositional bias: basic residues.

The protein belongs to the protamine P2 family. As to quaternary structure, interacts with TDRP. Post-translationally, proteolytic processing into mature chains is required for histone eviction during spermatogenesis. Transition proteins (TNP1 and TNP2) are required for processing. In terms of tissue distribution, testis.

It localises to the nucleus. The protein localises to the chromosome. Its function is as follows. Protamines substitute for histones in the chromatin of sperm during the haploid phase of spermatogenesis. They compact sperm DNA into a highly condensed, stable and inactive complex. This Macaca nemestrina (Pig-tailed macaque) protein is Protamine-2 (PRM2).